The primary structure comprises 174 residues: MALNLEQKKAMVAEITDIANQAVSAVAADYRGLTVSEMSDLRKSAREARVHMRVYRNTLARRAFKETTYACLEEVLTGPIVLFFSQEEPGAAARLIEKFIKEHERLEVKGLALGGELLPAEKLKAVARLPSREEALSQLAAVLLAPVTKLVRTLNEPIAQVARVMAAVRDQKAA.

The protein belongs to the universal ribosomal protein uL10 family. As to quaternary structure, part of the ribosomal stalk of the 50S ribosomal subunit. The N-terminus interacts with L11 and the large rRNA to form the base of the stalk. The C-terminus forms an elongated spine to which L12 dimers bind in a sequential fashion forming a multimeric L10(L12)X complex.

In terms of biological role, forms part of the ribosomal stalk, playing a central role in the interaction of the ribosome with GTP-bound translation factors. The sequence is that of Large ribosomal subunit protein uL10 from Coxiella burnetii (strain CbuK_Q154) (Coxiella burnetii (strain Q154)).